Consider the following 191-residue polypeptide: UMP-CMP kinase 2 (191 aa).

12–17 lines the ATP pocket; that stretch reads GSGKGT. The tract at residues 32–62 is NMP; sequence SAGDLLRAERQREGSEFGALIESHIKNGSIV. Residues Arg38, 60–62, and 88–91 contribute to the a ribonucleoside 5'-phosphate site; these read SIV and GFPR. Asn95 provides a ligand contact to CMP. An LID region spans residues 128–136; it reads NRGQGRTDD. Residue Arg129 participates in ATP binding. A ribonucleoside 5'-phosphate is bound by residues Arg133 and Arg144. Arg172 serves as a coordination point for ATP.

The protein belongs to the adenylate kinase family. UMP-CMP kinase subfamily. In terms of assembly, monomer. Mg(2+) serves as cofactor. Expressed in neurons and the pharynx.

Its subcellular location is the cytoplasm. It localises to the nucleus. The enzyme catalyses CMP + ATP = CDP + ADP. It carries out the reaction dCMP + ATP = dCDP + ADP. The catalysed reaction is UMP + ATP = UDP + ADP. Functionally, catalyzes the phosphorylation of pyrimidine nucleoside monophosphates at the expense of ATP. Plays an important role in de novo pyrimidine nucleotide biosynthesis. Has preference for UMP and CMP as phosphate acceptors. The chain is UMP-CMP kinase 2 from Caenorhabditis elegans.